We begin with the raw amino-acid sequence, 193 residues long: Rho-related GTP-binding protein RhoA-A (193 aa).

GTP is bound by residues 12–19 (GDGACGKT), 30–37 (FPEVYVPT), 59–63 (DTAGQ), 117–120 (NKKD), and 160–162 (SAK). Tyr34 carries (Microbial infection) O-linked (GlcNAc) tyrosine; by Yersinia Afp18 glycosylation. Position 190 is a cysteine methyl ester (Cys190). Cys190 is lipidated: S-geranylgeranyl cysteine. A propeptide spans 191–193 (ALL) (removed in mature form).

Belongs to the small GTPase superfamily. Rho family. (Microbial infection) Glycosylated at Tyr-34 by Yersinia ruckeri toxin Afp18. Mono-O-GlcNAcylation by Afp18 inhibits RhoA activation by guanine nucleotide exchange factors and blocks RhoA signaling.

It is found in the cell membrane. In terms of biological role, regulates a signal transduction pathway linking plasma membrane receptors to the assembly of focal adhesions and actin stress fibers. The chain is Rho-related GTP-binding protein RhoA-A from Danio rerio (Zebrafish).